The primary structure comprises 359 residues: Outer membrane protein P2 (359 aa).

An N-terminal signal peptide occupies residues 1-20 (MKKTLAALIVGAFAASAANA).

This sequence belongs to the Gram-negative porin family. Homotrimer.

Its subcellular location is the cell outer membrane. Functionally, forms pores that allow passive diffusion of small molecules across the outer membrane. This Haemophilus influenzae (strain ATCC 51907 / DSM 11121 / KW20 / Rd) protein is Outer membrane protein P2 (ompP2).